Reading from the N-terminus, the 418-residue chain is MNIFEELKARGLVFQTTDEQALVKALTEGQVSYYTGYDPTADSLHLGHLVAILTSRRLQLAGHKPYALVGGATGLIGDPSFKDAERSLQTKETVLEWSDKIKGQLSTFLDFENGDNKAELVNNYDWFSQISFIDFLRDVGKYFTVNYMMSKDSVKKRIETGISYTEFAYQIMQGYDFYELNDKHNVTLQIGGSDQWGNMTAGTELLRKKADKTGHVMTVPLITDSTGKKFGKSEGNAVWLDADKTSPYEMYQFWLNVMDDDAVRFLKIFTFLSLDEIAEIETQFNAARHERLAQKILAREVVTLVHGEEAYKQALNITEQLFAGNIKNLSANELKQGLSNVPNYHVQSEDSLNLVDMLVTAGISPSKRQAREDVQNGAIYINGDRVQDLDYQLSNDDKTDDQLTVIRRGKKKYAVLTY.

Y34 serves as a coordination point for L-tyrosine. The 'HIGH' region signature appears at 39–48; it reads PTADSLHLGH. Residues Y169 and Q173 each contribute to the L-tyrosine site. A 'KMSKS' region motif is present at residues 229 to 233; that stretch reads KFGKS. K232 contacts ATP. Positions 352 to 418 constitute an S4 RNA-binding domain; the sequence is LNLVDMLVTA…GKKKYAVLTY (67 aa).

Belongs to the class-I aminoacyl-tRNA synthetase family. TyrS type 1 subfamily. In terms of assembly, homodimer.

The protein resides in the cytoplasm. The enzyme catalyses tRNA(Tyr) + L-tyrosine + ATP = L-tyrosyl-tRNA(Tyr) + AMP + diphosphate + H(+). Catalyzes the attachment of tyrosine to tRNA(Tyr) in a two-step reaction: tyrosine is first activated by ATP to form Tyr-AMP and then transferred to the acceptor end of tRNA(Tyr). This is Tyrosine--tRNA ligase from Streptococcus pyogenes serotype M5 (strain Manfredo).